Consider the following 218-residue polypeptide: Protein-methionine-sulfoxide reductase heme-binding subunit MsrQ (218 aa).

5 helical membrane-spanning segments follow: residues 14–34, 60–80, 86–106, 121–141, and 155–175; these read LVHAAALAPIALLGWQFWQVW, LLLITLAITPLRQLTGQAVVI, LGLYAFFYATVHLAAYLTLDL, PYITVGFAAWLLLMPLAITST, and LHMLIYPIGLLAVLHFWWLVK.

This sequence belongs to the MsrQ family. In terms of assembly, heterodimer of a catalytic subunit (MsrP) and a heme-binding subunit (MsrQ). FMN is required as a cofactor. The cofactor is heme b.

The protein localises to the cell inner membrane. Part of the MsrPQ system that repairs oxidized periplasmic proteins containing methionine sulfoxide residues (Met-O), using respiratory chain electrons. Thus protects these proteins from oxidative-stress damage caused by reactive species of oxygen and chlorine generated by the host defense mechanisms. MsrPQ is essential for the maintenance of envelope integrity under bleach stress, rescuing a wide series of structurally unrelated periplasmic proteins from methionine oxidation. MsrQ provides electrons for reduction to the reductase catalytic subunit MsrP, using the quinone pool of the respiratory chain. This is Protein-methionine-sulfoxide reductase heme-binding subunit MsrQ from Xanthomonas axonopodis pv. citri (strain 306).